The primary structure comprises 270 residues: Probable 6-oxopurine nucleoside phosphorylase (270 aa).

Residues S10 and 48-49 (RH) each bind phosphate. Substrate is bound at residue M191. Position 192 (T192) interacts with phosphate. Substrate is bound at residue 215 to 217 (NYA).

The protein belongs to the PNP/MTAP phosphorylase family. MTAP subfamily. Homohexamer. Dimer of a homotrimer.

It carries out the reaction a purine D-ribonucleoside + phosphate = a purine nucleobase + alpha-D-ribose 1-phosphate. Its pathway is purine metabolism; purine nucleoside salvage. Purine nucleoside phosphorylase which is highly specific for 6-oxopurine nucleosides. Cleaves guanosine or inosine to respective bases and sugar-1-phosphate molecules. Involved in purine salvage. In Korarchaeum cryptofilum (strain OPF8), this protein is Probable 6-oxopurine nucleoside phosphorylase.